We begin with the raw amino-acid sequence, 446 residues long: Putative ankyrin repeat protein L273 (446 aa).

6 ANK repeats span residues 71 to 100 (NGEF…KSNM), 124 to 153 (DHNK…RMRP), 206 to 237 (TDIE…KILM), 245 to 277 (VWVS…KMHV), 303 to 332 (ELEY…NSYY), and 365 to 394 (YTDI…QQII).

The chain is Putative ankyrin repeat protein L273 from Acanthamoeba polyphaga (Amoeba).